Consider the following 155-residue polypeptide: Aspartate carbamoyltransferase regulatory chain (155 aa).

Residues Cys-110, Cys-115, Cys-139, and Cys-142 each contribute to the Zn(2+) site.

Belongs to the PyrI family. In terms of assembly, contains catalytic and regulatory chains. Zn(2+) is required as a cofactor.

Involved in allosteric regulation of aspartate carbamoyltransferase. The sequence is that of Aspartate carbamoyltransferase regulatory chain from Yersinia pseudotuberculosis serotype IB (strain PB1/+).